A 375-amino-acid polypeptide reads, in one-letter code: Serpin B5 (375 aa).

5 N-linked (GlcNAc...) asparagine glycosylation sites follow: asparagine 99, asparagine 133, asparagine 155, asparagine 188, and asparagine 361.

Belongs to the serpin family. Ov-serpin subfamily. As to quaternary structure, interacts with IRF6.

The protein localises to the secreted. The protein resides in the extracellular space. Functionally, tumor suppressor. It blocks the growth, invasion, and metastatic properties of mammary tumors. As it does not undergo the S (stressed) to R (relaxed) conformational transition characteristic of active serpins, it exhibits no serine protease inhibitory activity. This chain is Serpin B5 (SERPINB5), found in Plecturocebus moloch (Dusky titi monkey).